The chain runs to 222 residues: Peptide methionine sulfoxide reductase MsrA (222 aa).

Cysteine 55 is a catalytic residue.

It belongs to the MsrA Met sulfoxide reductase family.

It catalyses the reaction L-methionyl-[protein] + [thioredoxin]-disulfide + H2O = L-methionyl-(S)-S-oxide-[protein] + [thioredoxin]-dithiol. It carries out the reaction [thioredoxin]-disulfide + L-methionine + H2O = L-methionine (S)-S-oxide + [thioredoxin]-dithiol. Its function is as follows. Has an important function as a repair enzyme for proteins that have been inactivated by oxidation. Catalyzes the reversible oxidation-reduction of methionine sulfoxide in proteins to methionine. In Streptomyces griseus subsp. griseus (strain JCM 4626 / CBS 651.72 / NBRC 13350 / KCC S-0626 / ISP 5235), this protein is Peptide methionine sulfoxide reductase MsrA.